Reading from the N-terminus, the 521-residue chain is Alkyl hydroperoxide reductase subunit F (521 aa).

213 to 228 contributes to the FAD binding site; sequence DVLVVGGGPAGAAAAI. Cysteines 344 and 347 form a disulfide. An NAD(+)-binding site is contributed by 356–370; sequence RVAVIGGGNSGVEAA. 477-487 contributes to the FAD binding site; the sequence is TSLPGIFAAGD.

This sequence belongs to the class-II pyridine nucleotide-disulfide oxidoreductase family. In terms of assembly, homodimer. FAD serves as cofactor.

In terms of biological role, serves to protect the cell against DNA damage by alkyl hydroperoxides. It can use either NADH or NADPH as electron donor for direct reduction of redox dyes or of alkyl hydroperoxides when combined with the AhpC protein. The chain is Alkyl hydroperoxide reductase subunit F (ahpF) from Pseudomonas aeruginosa (strain ATCC 15692 / DSM 22644 / CIP 104116 / JCM 14847 / LMG 12228 / 1C / PRS 101 / PAO1).